Here is a 245-residue protein sequence, read N- to C-terminus: Phosphoribosylaminoimidazole-succinocarboxamide synthase (245 aa).

It belongs to the SAICAR synthetase family.

The catalysed reaction is 5-amino-1-(5-phospho-D-ribosyl)imidazole-4-carboxylate + L-aspartate + ATP = (2S)-2-[5-amino-1-(5-phospho-beta-D-ribosyl)imidazole-4-carboxamido]succinate + ADP + phosphate + 2 H(+). It participates in purine metabolism; IMP biosynthesis via de novo pathway; 5-amino-1-(5-phospho-D-ribosyl)imidazole-4-carboxamide from 5-amino-1-(5-phospho-D-ribosyl)imidazole-4-carboxylate: step 1/2. This Nostoc sp. (strain PCC 7120 / SAG 25.82 / UTEX 2576) protein is Phosphoribosylaminoimidazole-succinocarboxamide synthase.